A 132-amino-acid polypeptide reads, in one-letter code: Small ribosomal subunit protein uS8 (132 aa).

This sequence belongs to the universal ribosomal protein uS8 family. In terms of assembly, part of the 30S ribosomal subunit. Contacts proteins S5 and S12.

Functionally, one of the primary rRNA binding proteins, it binds directly to 16S rRNA central domain where it helps coordinate assembly of the platform of the 30S subunit. The sequence is that of Small ribosomal subunit protein uS8 from Parvibaculum lavamentivorans (strain DS-1 / DSM 13023 / NCIMB 13966).